The following is a 196-amino-acid chain: Ribonuclease HII (196 aa).

The RNase H type-2 domain occupies 9–196; sequence RLVAGVDEVG…KPVRRALGIE (188 aa). The a divalent metal cation site is built by aspartate 15, glutamate 16, and aspartate 107.

Belongs to the RNase HII family. The cofactor is Mn(2+). It depends on Mg(2+) as a cofactor.

It localises to the cytoplasm. The catalysed reaction is Endonucleolytic cleavage to 5'-phosphomonoester.. Functionally, endonuclease that specifically degrades the RNA of RNA-DNA hybrids. This is Ribonuclease HII from Aeromonas hydrophila subsp. hydrophila (strain ATCC 7966 / DSM 30187 / BCRC 13018 / CCUG 14551 / JCM 1027 / KCTC 2358 / NCIMB 9240 / NCTC 8049).